Reading from the N-terminus, the 335-residue chain is Transcription factor IIIA (335 aa).

9 C2H2-type zinc fingers span residues 13–37, 43–67, 73–98, 105–129, 135–159, 162–188, 192–214, 221–246, and 252–276; these read YICSFADCSASYNKNWKLQAHLCKH, FPCTVEGCGKGFVTLFHLTRHSMTH, CKCDAPDCDLSFTTMTNLRKHYQRAH, YECYFADCGQTFKKHNQLKLHQYIH, FKCNHEGCDKSFSSPSRLKRHEKVH, YPCQKDSSCSFVGKTWTEYMKHLAASH, TICDVCNRKFKNKTHLKDHKRTH, YKCPRDGCDRTYTKKFGLQSHILSFH, and FACGHPGCGKTFAMKQSLDRHANTH. The span at 269 to 280 shows a compositional bias: basic and acidic residues; it reads LDRHANTHDPEK. The tract at residues 269–335 is disordered; that stretch reads LDRHANTHDP…ATAMQNLSIK (67 aa). The segment covering 281–292 has biased composition (basic residues); that stretch reads KKMKKPRPKKSL.

The protein localises to the nucleus. Its function is as follows. Involved in ribosomal large subunit biogenesis. Interacts with the internal control region (ICR) of approximately 50 bases within the 5S RNA genes, is required for correct transcription of these genes by RNA polymerase III. Also binds the transcribed 5S RNA's. This chain is Transcription factor IIIA (gtf3a), found in Lithobates pipiens (Northern leopard frog).